We begin with the raw amino-acid sequence, 84 residues long: Magnetosome protein MamR (84 aa).

It belongs to the magnetosome MamR family.

It is found in the magnetosome. Its function is as follows. May play a role in controlling magnetite number and size but not in control of magnetite morphology. This is Magnetosome protein MamR from Paramagnetospirillum magneticum (strain ATCC 700264 / AMB-1) (Magnetospirillum magneticum).